The chain runs to 328 residues: MSEKIRVLLYYKYVSIENAQEYAAKHLEFCKSIGLKGRILIADEGINGTVSGDYETTQKYMDWVHSDERFADLWFKIDEENQQAFRKMFVRYKKEIVHLGLEDNNFDSDINPLETTGEYLNPKQFKEALLDEDTVVLDTRNDYEYDLGHFRGAIRPDIRNFRELPQWVRDNKDKFMEKRVVVYCTGGVRCEKFSGWMVREGFKDVGQLHGGIATYGKDPEVQGELWDGAMYVFDDRISVPINHVNPTVISKDYFDGTPCERYVNCANPFCNKQIFASEENETKYVRGCSPECRAHERNRYVQENGLSRQGWAERLEAIGESLPEFVGA.

One can recognise a Rhodanese domain in the interval 130–224 (LDEDTVVLDT…YGKDPEVQGE (95 aa)). Cys-184 (cysteine persulfide intermediate) is an active-site residue.

This sequence belongs to the TrhO family.

It catalyses the reaction uridine(34) in tRNA + AH2 + O2 = 5-hydroxyuridine(34) in tRNA + A + H2O. Its function is as follows. Catalyzes oxygen-dependent 5-hydroxyuridine (ho5U) modification at position 34 in tRNAs. This Streptococcus pyogenes serotype M28 (strain MGAS6180) protein is tRNA uridine(34) hydroxylase.